Reading from the N-terminus, the 550-residue chain is Glutamyl-tRNA(Gln) amidotransferase subunit A, mitochondrial (550 aa).

Residues K79 and S171 each act as charge relay system in the active site. S195 acts as the Acyl-ester intermediate in catalysis. The tract at residues 371–390 is disordered; sequence EKDENKVDNDNDDDDDVDEN.

Belongs to the amidase family. GatA subfamily. Subunit of the heterotrimeric GatCAB amidotransferase (AdT) complex, composed of A, B and C subunits.

Its subcellular location is the mitochondrion. The enzyme catalyses L-glutamyl-tRNA(Gln) + L-glutamine + ATP + H2O = L-glutaminyl-tRNA(Gln) + L-glutamate + ADP + phosphate + H(+). Allows the formation of correctly charged Gln-tRNA(Gln) through the transamidation of misacylated Glu-tRNA(Gln) in the mitochondria. The reaction takes place in the presence of glutamine and ATP through an activated gamma-phospho-Glu-tRNA(Gln). The sequence is that of Glutamyl-tRNA(Gln) amidotransferase subunit A, mitochondrial from Dictyostelium discoideum (Social amoeba).